A 316-amino-acid chain; its full sequence is tRNA dimethylallyltransferase (316 aa).

Residue 14–21 coordinates ATP; that stretch reads GPTAVGKT. Substrate is bound at residue 16 to 21; it reads TAVGKT. Positions 39–42 are interaction with substrate tRNA; that stretch reads DSMQ.

Belongs to the IPP transferase family. Monomer. Mg(2+) is required as a cofactor.

It catalyses the reaction adenosine(37) in tRNA + dimethylallyl diphosphate = N(6)-dimethylallyladenosine(37) in tRNA + diphosphate. Functionally, catalyzes the transfer of a dimethylallyl group onto the adenine at position 37 in tRNAs that read codons beginning with uridine, leading to the formation of N6-(dimethylallyl)adenosine (i(6)A). The chain is tRNA dimethylallyltransferase from Bacillus cytotoxicus (strain DSM 22905 / CIP 110041 / 391-98 / NVH 391-98).